The sequence spans 318 residues: Beta-ketoacyl-[acyl-carrier-protein] synthase III (318 aa).

Active-site residues include Cys-112 and His-245. The ACP-binding stretch occupies residues Gln-246–Arg-250. Asn-275 is a catalytic residue.

Belongs to the thiolase-like superfamily. FabH family. As to quaternary structure, homodimer.

It is found in the cytoplasm. It carries out the reaction malonyl-[ACP] + acetyl-CoA + H(+) = 3-oxobutanoyl-[ACP] + CO2 + CoA. It participates in lipid metabolism; fatty acid biosynthesis. Its function is as follows. Catalyzes the condensation reaction of fatty acid synthesis by the addition to an acyl acceptor of two carbons from malonyl-ACP. Catalyzes the first condensation reaction which initiates fatty acid synthesis and may therefore play a role in governing the total rate of fatty acid production. Possesses both acetoacetyl-ACP synthase and acetyl transacylase activities. Its substrate specificity determines the biosynthesis of branched-chain and/or straight-chain of fatty acids. The protein is Beta-ketoacyl-[acyl-carrier-protein] synthase III of Nitrosomonas europaea (strain ATCC 19718 / CIP 103999 / KCTC 2705 / NBRC 14298).